A 1199-amino-acid polypeptide reads, in one-letter code: Pyruvate-flavodoxin oxidoreductase (1199 aa).

4Fe-4S ferredoxin-type domains lie at 699–728 (EIPVWDTDICVQCSKCVMVCPHAAIRAKVY) and 755–784 (FTIQVAPEDCTGCAICVNVCPAKNKSEPSL). [4Fe-4S] cluster is bound by residues Cys-708, Cys-711, Cys-714, Cys-718, Cys-764, Cys-767, Cys-770, Cys-774, Cys-838, Cys-841, Cys-866, and Cys-1103.

It belongs to the pyruvate:ferredoxin/flavodoxin oxidoreductase family. [4Fe-4S] cluster is required as a cofactor.

It catalyses the reaction oxidized [flavodoxin] + pyruvate + CoA + 2 H(+) = reduced [flavodoxin] + acetyl-CoA + CO2. Functionally, oxidoreductase required for the transfer of electrons from pyruvate to flavodoxin, which reduces nitrogenase. The protein is Pyruvate-flavodoxin oxidoreductase (nifJ) of Nostoc sp. (strain PCC 7120 / SAG 25.82 / UTEX 2576).